Here is a 220-residue protein sequence, read N- to C-terminus: Ribosome assembly protein 3 (220 aa).

The tract at residues 1–91 is disordered; the sequence is MSAGDISAIN…VSDVELTDEE (91 aa). Residues 13 to 24 are compositionally biased toward basic residues; it reads SVKKNRRRKKRR. Low complexity predominate over residues 29-39; the sequence is SSSDSSSSDPS. The segment covering 41–72 has biased composition (basic and acidic residues); sequence ESEKEEIQNGAIEEHVGENGKSDHVFSKGNDE. The span at 73–91 shows a compositional bias: acidic residues; sequence DKQEDIAIEVSDVELTDEE. Serine 83 bears the Phosphoserine mark. Residue threonine 88 is modified to Phosphothreonine. Serine 99 is subject to Phosphoserine.

Belongs to the RSA3 family. Associates with nucleolar pre-ribosomal particles. Interacts with DBP6. Together with DBP6, NOP8, URB1 and URB2, forms an RNA-independent complex, which is required during early maturation of nascent 60S ribosomal subunits.

The protein localises to the nucleus. It is found in the nucleolus. In terms of biological role, required for efficient biogenesis of the 60S ribosomal subunit. This chain is Ribosome assembly protein 3 (RSA3), found in Saccharomyces cerevisiae (strain ATCC 204508 / S288c) (Baker's yeast).